Consider the following 466-residue polypeptide: Asparagine--tRNA ligase (466 aa).

This sequence belongs to the class-II aminoacyl-tRNA synthetase family. As to quaternary structure, homodimer.

The protein resides in the cytoplasm. It catalyses the reaction tRNA(Asn) + L-asparagine + ATP = L-asparaginyl-tRNA(Asn) + AMP + diphosphate + H(+). This is Asparagine--tRNA ligase from Shigella dysenteriae serotype 1 (strain Sd197).